Here is a 152-residue protein sequence, read N- to C-terminus: Small ribosomal subunit protein bS6 (152 aa).

It belongs to the bacterial ribosomal protein bS6 family.

Binds together with bS18 to 16S ribosomal RNA. In Bdellovibrio bacteriovorus (strain ATCC 15356 / DSM 50701 / NCIMB 9529 / HD100), this protein is Small ribosomal subunit protein bS6.